A 258-amino-acid chain; its full sequence is Malonyl-[acyl-carrier protein] O-methyltransferase (258 aa).

Belongs to the methyltransferase superfamily.

The catalysed reaction is malonyl-[ACP] + S-adenosyl-L-methionine = malonyl-[ACP] methyl ester + S-adenosyl-L-homocysteine. It functions in the pathway cofactor biosynthesis; biotin biosynthesis. Its function is as follows. Converts the free carboxyl group of a malonyl-thioester to its methyl ester by transfer of a methyl group from S-adenosyl-L-methionine (SAM). It allows to synthesize pimeloyl-ACP via the fatty acid synthetic pathway. The sequence is that of Malonyl-[acyl-carrier protein] O-methyltransferase from Hamiltonella defensa subsp. Acyrthosiphon pisum (strain 5AT).